The following is a 211-amino-acid chain: Thymidylate kinase (211 aa).

Residue 10 to 17 participates in ATP binding; the sequence is GLDGSGKT.

It belongs to the thymidylate kinase family.

The enzyme catalyses dTMP + ATP = dTDP + ADP. Phosphorylation of dTMP to form dTDP in both de novo and salvage pathways of dTTP synthesis. The sequence is that of Thymidylate kinase from Blochmanniella floridana.